Here is a 258-residue protein sequence, read N- to C-terminus: Tetraspanin-15 (258 aa).

Residues Met1–Tyr20 are Cytoplasmic-facing. Residues Ile21–Leu41 form a helical membrane-spanning segment. Residues Leu42–Arg62 lie on the Extracellular side of the membrane. A helical membrane pass occupies residues Ile63–Phe83. Over Lys84–Cys93 the chain is Cytoplasmic. The helical transmembrane segment at Ala94 to Phe114 threads the bilayer. The Extracellular portion of the chain corresponds to Arg115–Asp223. Residues Leu224–Ile244 form a helical membrane-spanning segment. Topologically, residues Pro245 to Lys258 are cytoplasmic.

Belongs to the tetraspanin (TM4SF) family. In terms of assembly, interacts with doxa-1 and bli-3. Expressed in the body wall (hyp7 hypodermal syncitium), pharynx and vulva. Expressed in a punctate pattern along the thick region of the hypodermis.

It localises to the membrane. Its function is as follows. Plays a role in cuticle biogenesis. In complex with doxa-1 and the dual oxidase bli-3, promotes the generation of reactive oxygen species (ROS) and tyrosine cross-linking of collagen, thus stabilizing cuticular extracellular matrix. This chain is Tetraspanin-15, found in Caenorhabditis elegans.